Here is a 37-residue protein sequence, read N- to C-terminus: Large ribosomal subunit protein bL36 (37 aa).

It belongs to the bacterial ribosomal protein bL36 family.

The polypeptide is Large ribosomal subunit protein bL36 (Staphylococcus aureus (strain Mu3 / ATCC 700698)).